Here is a 122-residue protein sequence, read N- to C-terminus: Large ribosomal subunit protein uL14 (122 aa).

Belongs to the universal ribosomal protein uL14 family. As to quaternary structure, part of the 50S ribosomal subunit. Forms a cluster with proteins L3 and L19. In the 70S ribosome, L14 and L19 interact and together make contacts with the 16S rRNA in bridges B5 and B8.

Functionally, binds to 23S rRNA. Forms part of two intersubunit bridges in the 70S ribosome. The protein is Large ribosomal subunit protein uL14 of Nitrosospira multiformis (strain ATCC 25196 / NCIMB 11849 / C 71).